A 191-amino-acid chain; its full sequence is Xanthine phosphoribosyltransferase (191 aa).

Residues L20 and N27 each coordinate xanthine. 128-132 (ANGQA) serves as a coordination point for 5-phospho-alpha-D-ribose 1-diphosphate. K156 is a binding site for xanthine.

The protein belongs to the purine/pyrimidine phosphoribosyltransferase family. Xpt subfamily. In terms of assembly, homodimer.

Its subcellular location is the cytoplasm. The enzyme catalyses XMP + diphosphate = xanthine + 5-phospho-alpha-D-ribose 1-diphosphate. It functions in the pathway purine metabolism; XMP biosynthesis via salvage pathway; XMP from xanthine: step 1/1. Its function is as follows. Converts the preformed base xanthine, a product of nucleic acid breakdown, to xanthosine 5'-monophosphate (XMP), so it can be reused for RNA or DNA synthesis. The polypeptide is Xanthine phosphoribosyltransferase (Limosilactobacillus reuteri (strain DSM 20016) (Lactobacillus reuteri)).